The following is a 162-amino-acid chain: D-aminoacyl-tRNA deacylase (162 aa).

A Gly-cisPro motif, important for rejection of L-amino acids motif is present at residues 145–146 (GP).

Belongs to the DTD family. In terms of assembly, homodimer.

It localises to the cytoplasm. The catalysed reaction is glycyl-tRNA(Ala) + H2O = tRNA(Ala) + glycine + H(+). It carries out the reaction a D-aminoacyl-tRNA + H2O = a tRNA + a D-alpha-amino acid + H(+). Functionally, an aminoacyl-tRNA editing enzyme that deacylates mischarged D-aminoacyl-tRNAs. Also deacylates mischarged glycyl-tRNA(Ala), protecting cells against glycine mischarging by AlaRS. Acts via tRNA-based rather than protein-based catalysis; rejects L-amino acids rather than detecting D-amino acids in the active site. By recycling D-aminoacyl-tRNA to D-amino acids and free tRNA molecules, this enzyme counteracts the toxicity associated with the formation of D-aminoacyl-tRNA entities in vivo and helps enforce protein L-homochirality. The polypeptide is D-aminoacyl-tRNA deacylase (Bifidobacterium longum (strain NCC 2705)).